The following is a 182-amino-acid chain: Large ribosomal subunit protein uL10 (182 aa).

The protein belongs to the universal ribosomal protein uL10 family. In terms of assembly, part of the ribosomal stalk of the 50S ribosomal subunit. The N-terminus interacts with L11 and the large rRNA to form the base of the stalk. The C-terminus forms an elongated spine to which L12 dimers bind in a sequential fashion forming a multimeric L10(L12)X complex.

Forms part of the ribosomal stalk, playing a central role in the interaction of the ribosome with GTP-bound translation factors. In Herminiimonas arsenicoxydans, this protein is Large ribosomal subunit protein uL10.